The following is a 238-amino-acid chain: Ribonuclease PH (238 aa).

Phosphate-binding positions include R86 and 124-126; that span reads GTR.

The protein belongs to the RNase PH family. As to quaternary structure, homohexameric ring arranged as a trimer of dimers.

The enzyme catalyses tRNA(n+1) + phosphate = tRNA(n) + a ribonucleoside 5'-diphosphate. Phosphorolytic 3'-5' exoribonuclease that plays an important role in tRNA 3'-end maturation. Removes nucleotide residues following the 3'-CCA terminus of tRNAs; can also add nucleotides to the ends of RNA molecules by using nucleoside diphosphates as substrates, but this may not be physiologically important. Probably plays a role in initiation of 16S rRNA degradation (leading to ribosome degradation) during starvation. This is Ribonuclease PH from Shigella dysenteriae serotype 1 (strain Sd197).